A 227-amino-acid chain; its full sequence is Cytochrome c oxidase subunit 2 (227 aa).

Topologically, residues 1-14 are mitochondrial intermembrane; it reads MAYPMQLGFQDATS. Residues 15-45 form a helical membrane-spanning segment; sequence PIMEELLHFHDHTLMIVFLISSLVLYVISLM. Topologically, residues 46 to 59 are mitochondrial matrix; that stretch reads LTTKLTHTSTMDAQ. A helical transmembrane segment spans residues 60-87; that stretch reads EVETIWTILPAIILILIALPSLRILYMM. The Mitochondrial intermembrane portion of the chain corresponds to 88 to 227; that stretch reads DEINNPSLTV…YFEKWSASML (140 aa). 6 residues coordinate Cu cation: His161, Cys196, Glu198, Cys200, His204, and Met207. Position 198 (Glu198) interacts with Mg(2+).

This sequence belongs to the cytochrome c oxidase subunit 2 family. Component of the cytochrome c oxidase (complex IV, CIV), a multisubunit enzyme composed of 14 subunits. The complex is composed of a catalytic core of 3 subunits MT-CO1, MT-CO2 and MT-CO3, encoded in the mitochondrial DNA, and 11 supernumerary subunits COX4I, COX5A, COX5B, COX6A, COX6B, COX6C, COX7A, COX7B, COX7C, COX8 and NDUFA4, which are encoded in the nuclear genome. The complex exists as a monomer or a dimer and forms supercomplexes (SCs) in the inner mitochondrial membrane with NADH-ubiquinone oxidoreductase (complex I, CI) and ubiquinol-cytochrome c oxidoreductase (cytochrome b-c1 complex, complex III, CIII), resulting in different assemblies (supercomplex SCI(1)III(2)IV(1) and megacomplex MCI(2)III(2)IV(2)). Found in a complex with TMEM177, COA6, COX18, COX20, SCO1 and SCO2. Interacts with TMEM177 in a COX20-dependent manner. Interacts with COX20. Interacts with COX16. It depends on Cu cation as a cofactor.

The protein resides in the mitochondrion inner membrane. The enzyme catalyses 4 Fe(II)-[cytochrome c] + O2 + 8 H(+)(in) = 4 Fe(III)-[cytochrome c] + 2 H2O + 4 H(+)(out). In terms of biological role, component of the cytochrome c oxidase, the last enzyme in the mitochondrial electron transport chain which drives oxidative phosphorylation. The respiratory chain contains 3 multisubunit complexes succinate dehydrogenase (complex II, CII), ubiquinol-cytochrome c oxidoreductase (cytochrome b-c1 complex, complex III, CIII) and cytochrome c oxidase (complex IV, CIV), that cooperate to transfer electrons derived from NADH and succinate to molecular oxygen, creating an electrochemical gradient over the inner membrane that drives transmembrane transport and the ATP synthase. Cytochrome c oxidase is the component of the respiratory chain that catalyzes the reduction of oxygen to water. Electrons originating from reduced cytochrome c in the intermembrane space (IMS) are transferred via the dinuclear copper A center (CU(A)) of subunit 2 and heme A of subunit 1 to the active site in subunit 1, a binuclear center (BNC) formed by heme A3 and copper B (CU(B)). The BNC reduces molecular oxygen to 2 water molecules using 4 electrons from cytochrome c in the IMS and 4 protons from the mitochondrial matrix. The protein is Cytochrome c oxidase subunit 2 (MT-CO2) of Gazella spekei (Speke's gazelle).